Reading from the N-terminus, the 142-residue chain is Large ribosomal subunit protein uL13 (142 aa).

This sequence belongs to the universal ribosomal protein uL13 family. In terms of assembly, part of the 50S ribosomal subunit.

In terms of biological role, this protein is one of the early assembly proteins of the 50S ribosomal subunit, although it is not seen to bind rRNA by itself. It is important during the early stages of 50S assembly. The chain is Large ribosomal subunit protein uL13 from Pyrococcus furiosus (strain ATCC 43587 / DSM 3638 / JCM 8422 / Vc1).